The chain runs to 255 residues: Triosephosphate isomerase (255 aa).

9-11 (NWK) is a binding site for substrate. The active-site Electrophile is the His-95. Glu-167 functions as the Proton acceptor in the catalytic mechanism. Substrate is bound by residues Gly-173, Ser-212, and 233 to 234 (GG).

It belongs to the triosephosphate isomerase family. Homodimer.

It is found in the cytoplasm. It catalyses the reaction D-glyceraldehyde 3-phosphate = dihydroxyacetone phosphate. Its pathway is carbohydrate biosynthesis; gluconeogenesis. It functions in the pathway carbohydrate degradation; glycolysis; D-glyceraldehyde 3-phosphate from glycerone phosphate: step 1/1. Its function is as follows. Involved in the gluconeogenesis. Catalyzes stereospecifically the conversion of dihydroxyacetone phosphate (DHAP) to D-glyceraldehyde-3-phosphate (G3P). This is Triosephosphate isomerase from Photorhabdus laumondii subsp. laumondii (strain DSM 15139 / CIP 105565 / TT01) (Photorhabdus luminescens subsp. laumondii).